Reading from the N-terminus, the 203-residue chain is MARFRGSITKVSRRLGVALAPKAEKYLGRRAYAPGQHGQSRKGKISEYALQLREKQKMKYIYGVLERQFRNYYKKAVSQRGVTGENLVKLLECRFDNVVFRAGFSPSRAGARQLVSHCHLRINGNKVNIPSYQVKPGDVIDFREKSRNMDAVRNSLNKTPDSRIPQWIQVDKANMKAVFLNVPERADIQEPYNEQLVVELYSK.

The S4 RNA-binding domain occupies 93–154; it reads CRFDNVVFRA…KSRNMDAVRN (62 aa).

The protein belongs to the universal ribosomal protein uS4 family. In terms of assembly, part of the 30S ribosomal subunit. Contacts protein S5. The interaction surface between S4 and S5 is involved in control of translational fidelity.

Functionally, one of the primary rRNA binding proteins, it binds directly to 16S rRNA where it nucleates assembly of the body of the 30S subunit. With S5 and S12 plays an important role in translational accuracy. This is Small ribosomal subunit protein uS4 from Chloroherpeton thalassium (strain ATCC 35110 / GB-78).